Reading from the N-terminus, the 596-residue chain is Succinate dehydrogenase flavoprotein subunit (596 aa).

Residues 18-23, 41-56, and aspartate 225 each bind FAD; these read GAGGAG and SKLF…AQGG. Position 49 is a tele-8alpha-FAD histidine (histidine 49). Residues histidine 246 and threonine 258 each contribute to the substrate site. The active-site Proton acceptor is the arginine 290. Histidine 357 contributes to the substrate binding site. Glutamate 391 contributes to the FAD binding site. Arginine 402 serves as a coordination point for substrate. 407 to 408 contacts FAD; sequence SL.

It belongs to the FAD-dependent oxidoreductase 2 family. FRD/SDH subfamily. As to quaternary structure, part of an enzyme complex containing four subunits: a flavoprotein, an iron-sulfur, cytochrome b-556, and a hydrophobic anchor protein. FAD is required as a cofactor.

It is found in the cell inner membrane. The enzyme catalyses a quinone + succinate = fumarate + a quinol. The protein operates within carbohydrate metabolism; tricarboxylic acid cycle; fumarate from succinate (bacterial route): step 1/1. The protein is Succinate dehydrogenase flavoprotein subunit (sdhA) of Rickettsia bellii (strain RML369-C).